A 32-amino-acid chain; its full sequence is SLRGFLKGVGTALAGVGKVVADQFDKLLQAGQ.

Position 32 is a glutamine amide (Q32).

As to expression, expressed by the skin glands.

The protein localises to the secreted. Antimicrobial peptide, active against the Gram-positive bacterium S.aureus, and the Gram-negative bacteriun E.coli. Has hemolytic activity at 432 uM. This Phyllomedusa tarsius (Brownbelly leaf frog) protein is Dermaseptin-8.